The sequence spans 119 residues: Large ribosomal subunit protein bL20 (119 aa).

The protein belongs to the bacterial ribosomal protein bL20 family.

Its function is as follows. Binds directly to 23S ribosomal RNA and is necessary for the in vitro assembly process of the 50S ribosomal subunit. It is not involved in the protein synthesizing functions of that subunit. This is Large ribosomal subunit protein bL20 from Acidithiobacillus ferrooxidans (strain ATCC 23270 / DSM 14882 / CIP 104768 / NCIMB 8455) (Ferrobacillus ferrooxidans (strain ATCC 23270)).